A 465-amino-acid chain; its full sequence is 23S rRNA (uracil(1939)-C(5))-methyltransferase RlmD (465 aa).

Positions 1–22 (MSEAVPTSARKSRNAPVAPGPA) are disordered. Residues 16–80 (PVAPGPAPVL…PSYEQATVVD (65 aa)) enclose the TRAM domain. Residues C93, C99, C102, and C181 each coordinate [4Fe-4S] cluster. Positions 289, 318, 323, 339, 367, and 388 each coordinate S-adenosyl-L-methionine. C421 (nucleophile) is an active-site residue.

The protein belongs to the class I-like SAM-binding methyltransferase superfamily. RNA M5U methyltransferase family. RlmD subfamily.

It carries out the reaction uridine(1939) in 23S rRNA + S-adenosyl-L-methionine = 5-methyluridine(1939) in 23S rRNA + S-adenosyl-L-homocysteine + H(+). Functionally, catalyzes the formation of 5-methyl-uridine at position 1939 (m5U1939) in 23S rRNA. The chain is 23S rRNA (uracil(1939)-C(5))-methyltransferase RlmD from Burkholderia lata (strain ATCC 17760 / DSM 23089 / LMG 22485 / NCIMB 9086 / R18194 / 383).